The following is a 312-amino-acid chain: Malate dehydrogenase 1 (312 aa).

NAD(+)-binding positions include 11–16 (GAGQIG) and Asp-35. Substrate contacts are provided by Arg-86 and Arg-92. Residues Asn-99 and 122 to 124 (ITN) each bind NAD(+). Substrate contacts are provided by Asn-124 and Arg-155. His-179 functions as the Proton acceptor in the catalytic mechanism.

Belongs to the LDH/MDH superfamily. MDH type 3 family.

It carries out the reaction (S)-malate + NAD(+) = oxaloacetate + NADH + H(+). Its function is as follows. Catalyzes the reversible oxidation of malate to oxaloacetate. This chain is Malate dehydrogenase 1, found in Anaeromyxobacter dehalogenans (strain 2CP-C).